The sequence spans 81 residues: Putative phytosulfokines 6 (81 aa).

Positions Met-1–Ala-20 are cleaved as a signal peptide. Positions Ile-21–Asp-72 are excised as a propeptide. Residues Tyr-73 and Tyr-75 each carry the sulfotyrosine modification. Residues His-78 to His-81 constitute a propeptide that is removed on maturation.

It belongs to the phytosulfokine family. Post-translationally, sulfation is important for activity and for the binding to a putative membrane receptor. PSK-beta is an enzymatic derivative of PSK-alpha. As to expression, expressed in roots, leaves, stems, flowers and siliques. Most abundant in vascular bundles and in root tips.

It is found in the secreted. In terms of biological role, promotes plant cell differentiation, organogenesis and somatic embryogenesis as well as cell proliferation. The polypeptide is Putative phytosulfokines 6 (PSK6) (Arabidopsis thaliana (Mouse-ear cress)).